Consider the following 500-residue polypeptide: L-arabinose isomerase (500 aa).

4 residues coordinate Mn(2+): Glu306, Glu333, His350, and His450.

The protein belongs to the arabinose isomerase family. In terms of assembly, homohexamer. The cofactor is Mn(2+).

It catalyses the reaction beta-L-arabinopyranose = L-ribulose. It functions in the pathway carbohydrate degradation; L-arabinose degradation via L-ribulose; D-xylulose 5-phosphate from L-arabinose (bacterial route): step 1/3. Functionally, catalyzes the conversion of L-arabinose to L-ribulose. This chain is L-arabinose isomerase, found in Yersinia pseudotuberculosis serotype O:3 (strain YPIII).